Consider the following 327-residue polypeptide: Biotin synthase (327 aa).

Residues 52–279 form the Radical SAM core domain; sequence TKVQLSTLVS…ASYVRLSAGR (228 aa). [4Fe-4S] cluster-binding residues include Cys-67, Cys-71, and Cys-74. Residues Cys-111, Cys-142, Cys-202, and Arg-274 each coordinate [2Fe-2S] cluster.

This sequence belongs to the radical SAM superfamily. Biotin synthase family. Homodimer. [4Fe-4S] cluster is required as a cofactor. [2Fe-2S] cluster serves as cofactor.

It carries out the reaction (4R,5S)-dethiobiotin + (sulfur carrier)-SH + 2 reduced [2Fe-2S]-[ferredoxin] + 2 S-adenosyl-L-methionine = (sulfur carrier)-H + biotin + 2 5'-deoxyadenosine + 2 L-methionine + 2 oxidized [2Fe-2S]-[ferredoxin]. It participates in cofactor biosynthesis; biotin biosynthesis; biotin from 7,8-diaminononanoate: step 2/2. In terms of biological role, catalyzes the conversion of dethiobiotin (DTB) to biotin by the insertion of a sulfur atom into dethiobiotin via a radical-based mechanism. The protein is Biotin synthase of Chromobacterium violaceum (strain ATCC 12472 / DSM 30191 / JCM 1249 / CCUG 213 / NBRC 12614 / NCIMB 9131 / NCTC 9757 / MK).